Consider the following 494-residue polypeptide: Folate-biopterin transporter (494 aa).

12 helical membrane passes run 31-51 (APSWELLAILSIYFVQGVLGL), 64-84 (LGLSPAAMGALIGLGAAPWIL), 104-124 (SYLWLSGLMGSAGWLLFAAWV), 133-153 (VLLFTSLSVAIGDVIVDSLVV), 170-190 (LTWGAAAVGGIITAYASGALL), 197-217 (TVFAITAIFPLLTVGAAFLIS), 246-266 (ILLPTLFIFFWQATPSAESAF), 284-303 (VRLVTSVAGLIGVGLYQRFL), 310-330 (VIMGWSTVISSLLGLTTLILI), 346-366 (LGDSIILTVTGQIAFMPVLVL), 375-395 (IEATLFALLMSVMNLAGVLSF), and 415-435 (LALLVIITNLSTLLPLPFLGL). Residues 441-461 (PQVKDKTEKEDNPDDPGDRLV) are disordered.

The protein belongs to the major facilitator superfamily. Folate-biopterin transporter (TC 2.A.71) family.

The protein localises to the cell membrane. Functionally, mediates folate monoglutamate transport involved in tetrahydrofolate biosynthesis. It also mediates transport of antifolates, such as methotrexate and aminopterin. This chain is Folate-biopterin transporter, found in Synechocystis sp. (strain ATCC 27184 / PCC 6803 / Kazusa).